A 316-amino-acid polypeptide reads, in one-letter code: Nucleotide-binding protein Sala_2050 (316 aa).

Position 18 to 25 (Gly18 to Ser25) interacts with ATP. Residue Asp69–Ser72 participates in GTP binding. The segment at Gly283–Arg316 is disordered.

It belongs to the RapZ-like family.

Displays ATPase and GTPase activities. This is Nucleotide-binding protein Sala_2050 from Sphingopyxis alaskensis (strain DSM 13593 / LMG 18877 / RB2256) (Sphingomonas alaskensis).